Consider the following 70-residue polypeptide: Large ribosomal subunit protein eL38 (70 aa).

Lysine 4 participates in a covalent cross-link: Glycyl lysine isopeptide (Lys-Gly) (interchain with G-Cter in SUMO2). At lysine 9 the chain carries N6-acetyllysine; alternate. Lysine 9 participates in a covalent cross-link: Glycyl lysine isopeptide (Lys-Gly) (interchain with G-Cter in SUMO2); alternate. Position 67 is an N6-acetyllysine (lysine 67).

It belongs to the eukaryotic ribosomal protein eL38 family. Component of the large ribosomal subunit.

The protein localises to the cytoplasm. Component of the large ribosomal subunit. The ribosome is a large ribonucleoprotein complex responsible for the synthesis of proteins in the cell. The protein is Large ribosomal subunit protein eL38 (Rpl38) of Mus musculus (Mouse).